The sequence spans 130 residues: MSMQDPISDMLTRIRNGQAANKVAVKMPSSKLKVAIAALLKAEGYIADFAVEGEVKAELEITLKYFQAKPVIEQIKRVSRPGLRVYKKKDELPSVMGGLGVAVVSTSKGLMSDRAARKAGLGGEIICYVA.

The protein belongs to the universal ribosomal protein uS8 family. In terms of assembly, part of the 30S ribosomal subunit. Contacts proteins S5 and S12.

Its function is as follows. One of the primary rRNA binding proteins, it binds directly to 16S rRNA central domain where it helps coordinate assembly of the platform of the 30S subunit. This is Small ribosomal subunit protein uS8 from Vibrio cholerae serotype O1 (strain ATCC 39541 / Classical Ogawa 395 / O395).